A 264-amino-acid chain; its full sequence is S-adenosylmethionine decarboxylase proenzyme (264 aa).

The Schiff-base intermediate with substrate; via pyruvic acid role is filled by Ser113. Ser113 carries the post-translational modification Pyruvic acid (Ser); by autocatalysis. His118 (proton acceptor; for processing activity) is an active-site residue. The active-site Proton donor; for catalytic activity is Cys141.

The protein belongs to the prokaryotic AdoMetDC family. Type 2 subfamily. In terms of assembly, heterooctamer of four alpha and four beta chains arranged as a tetramer of alpha/beta heterodimers. Requires pyruvate as cofactor. In terms of processing, is synthesized initially as an inactive proenzyme. Formation of the active enzyme involves a self-maturation process in which the active site pyruvoyl group is generated from an internal serine residue via an autocatalytic post-translational modification. Two non-identical subunits are generated from the proenzyme in this reaction, and the pyruvate is formed at the N-terminus of the alpha chain, which is derived from the carboxyl end of the proenzyme. The post-translation cleavage follows an unusual pathway, termed non-hydrolytic serinolysis, in which the side chain hydroxyl group of the serine supplies its oxygen atom to form the C-terminus of the beta chain, while the remainder of the serine residue undergoes an oxidative deamination to produce ammonia and the pyruvoyl group blocking the N-terminus of the alpha chain.

The catalysed reaction is S-adenosyl-L-methionine + H(+) = S-adenosyl 3-(methylsulfanyl)propylamine + CO2. It participates in amine and polyamine biosynthesis; S-adenosylmethioninamine biosynthesis; S-adenosylmethioninamine from S-adenosyl-L-methionine: step 1/1. Functionally, catalyzes the decarboxylation of S-adenosylmethionine to S-adenosylmethioninamine (dcAdoMet), the propylamine donor required for the synthesis of the polyamines spermine and spermidine from the diamine putrescine. The polypeptide is S-adenosylmethionine decarboxylase proenzyme (Xanthomonas euvesicatoria pv. vesicatoria (strain 85-10) (Xanthomonas campestris pv. vesicatoria)).